The sequence spans 279 residues: Fatty-acid-binding protein 1 (279 aa).

The dodecanoate site is built by Arg103, Tyr116, and Ser183.

Belongs to the chalcone isomerase family. In terms of tissue distribution, expressed in developing cotyledons, young seedlings, roots, seeds, embryos, macrospores, preanthesis and tapetum. Restricted to developing and reproductive tissues.

It localises to the plastid. Its subcellular location is the chloroplast stroma. Fatty-acid-binding protein. Interacts preferentially with saturated fatty acid. May be involved in alpha-linolenic (C18:3) metabolism. This Arabidopsis thaliana (Mouse-ear cress) protein is Fatty-acid-binding protein 1 (FAP1).